Here is a 160-residue protein sequence, read N- to C-terminus: NADH-quinone oxidoreductase subunit I (160 aa).

2 4Fe-4S ferredoxin-type domains span residues 52-81 and 91-120; these read RRYSNGEERCIACKLCEVICPAQAIVIEAE and TRYDIDMTKCIYCGLCQEACPVDAIVEGPN. Residues Cys61, Cys64, Cys67, Cys71, Cys100, Cys103, Cys106, and Cys110 each coordinate [4Fe-4S] cluster.

It belongs to the complex I 23 kDa subunit family. In terms of assembly, NDH-1 is composed of 14 different subunits. Subunits NuoA, H, J, K, L, M, N constitute the membrane sector of the complex. It depends on [4Fe-4S] cluster as a cofactor.

It is found in the cell membrane. The enzyme catalyses a quinone + NADH + 5 H(+)(in) = a quinol + NAD(+) + 4 H(+)(out). NDH-1 shuttles electrons from NADH, via FMN and iron-sulfur (Fe-S) centers, to quinones in the respiratory chain. The immediate electron acceptor for the enzyme in this species is believed to be ubiquinone. Couples the redox reaction to proton translocation (for every two electrons transferred, four hydrogen ions are translocated across the cytoplasmic membrane), and thus conserves the redox energy in a proton gradient. The chain is NADH-quinone oxidoreductase subunit I from Wolbachia sp. subsp. Brugia malayi (strain TRS).